The following is a 69-amino-acid chain: AFAGVLADADIKAALAGCAAAESFNYKTFFKFFAIIDQDHSGFIEEEELKLFLQTFSAGARALSDAETK.

Ala-1 carries the post-translational modification N-acetylalanine. An EF-hand domain is found at 24–59 (FNYKTFFKFFAIIDQDHSGFIEEEELKLFLQTFSAG). Ca(2+)-binding residues include Asp-37, Asp-39, Ser-41, Phe-43, Glu-45, and Glu-48.

It belongs to the parvalbumin family.

Its function is as follows. In muscle, parvalbumin is thought to be involved in relaxation after contraction. It binds two calcium ions. The chain is Parvalbumin beta 3 from Merluccius polli (Benguela hake).